The primary structure comprises 232 residues: Flavin-dependent thymidylate synthase (232 aa).

The ThyX domain occupies 1–204 (MKIALLQHTP…PTIFRDAGPG (204 aa)). Residues serine 55, 79–81 (RHR), and glutamine 87 contribute to the FAD site. Residues 76 to 79 (QLVR), 87 to 91 (QQSQR), and arginine 143 contribute to the dUMP site. Residues 79-89 (RHRIASYSQQS) carry the ThyX motif motif. Residues 159–161 (NAR) and histidine 165 contribute to the FAD site. Arginine 170 serves as a coordination point for dUMP. The Involved in ionization of N3 of dUMP, leading to its activation role is filled by arginine 170.

The protein belongs to the thymidylate synthase ThyX family. In terms of assembly, homotetramer. It depends on FAD as a cofactor.

It catalyses the reaction dUMP + (6R)-5,10-methylene-5,6,7,8-tetrahydrofolate + NADPH + H(+) = dTMP + (6S)-5,6,7,8-tetrahydrofolate + NADP(+). The protein operates within pyrimidine metabolism; dTTP biosynthesis. Catalyzes the reductive methylation of 2'-deoxyuridine-5'-monophosphate (dUMP) to 2'-deoxythymidine-5'-monophosphate (dTMP) while utilizing 5,10-methylenetetrahydrofolate (mTHF) as the methyl donor, and NADPH and FADH(2) as the reductant. The chain is Flavin-dependent thymidylate synthase from Geobacter sulfurreducens (strain ATCC 51573 / DSM 12127 / PCA).